The following is a 340-amino-acid chain: Replication factor C subunit 3 (340 aa).

The residue at position 2 (Ser-2) is an N-acetylserine. Residues 16–19, Arg-20, Tyr-28, 53–61, Asn-148, and Arg-206 contribute to the ATP site; these read VEKY and GPPGTGKTS.

It belongs to the activator 1 small subunits family. In terms of assembly, replication factor C (RFC) is a heteropentamer of subunits RFC1, RFC2, RFC3, RFC4 and RFC5 and forms a complex with POL30/PCNA in the presence of ATP. Component of the RAD24-RFC complex which consists of RAD14, RFC2, RFC3, RFC4 and RFC5 and associates with the checkpoint clamp DDC1:MEC3:RAD17 complex. Component of the ELG1-RFC complex which consists of ELG1, RFC2, RFC3, RFC4 and RFC5. Component of the CTF18-RFC complex, which consists of CTF18, CTF8, DCC1, RFC2, RFC3, RFC4 and RFC5. RFC3 interacts with ECO1 and POL30/PCNA.

Its subcellular location is the nucleus. Functionally, component of ATP-dependent clamp loader (RFC and RFC-like) complexes for DNA clamps, such as the POL30/PCNA homotrimer and the checkpoint clamp DDC1:MEC3:RAD17 complex. During a clamp loading circle, the RFC:clamp complex binds to DNA and the recognition of the double-stranded/single-stranded junction stimulates ATP hydrolysis by RFC. The complex presumably provides bipartite ATP sites in which one subunit supplies a catalytic site for hydrolysis of ATP bound to the neighboring subunit. Dissociation of RFC from the clamp leaves the clamp encircling DNA. Component of the replication factor C (RFC or activator 1) complex which loads POL30/PCNA and acts during elongation of primed DNA templates by DNA polymerase delta and epsilon. RFC has an essential but redundant activity in sister chromatid cohesion establishment. Component of the RFC-like complex CTF18-RFC which is required for efficient establishment of chromosome cohesion during S-phase and may load or unload POL30/PCNA. Component of the RFC-like RAD24-RFC complex which loads the checkpoint clamp DDC1:MEC3:RAD17 complex and is involved in DNA repair pathways. Component of the RFC-like ELG1-RFC complex which appears to have a role in DNA replication, replication fork re-start, recombination and repair. RFC3 supplies a catalytic site to the ATP site of RFC4. In Saccharomyces cerevisiae (strain ATCC 204508 / S288c) (Baker's yeast), this protein is Replication factor C subunit 3 (RFC3).